We begin with the raw amino-acid sequence, 350 residues long: Melatonin receptor type 1A (350 aa).

Residues 1–29 (MQGNGSALPNASQPVLRGDGARPSWLASA) lie on the Extracellular side of the membrane. 2 N-linked (GlcNAc...) asparagine glycosylation sites follow: N4 and N10. The chain crosses the membrane as a helical span at residues 30 to 50 (LACVLIFTIVVDILGNLLVIL). Over 51–63 (SVYRNKKLRNAGN) the chain is Cytoplasmic. A helical transmembrane segment spans residues 64–84 (IFVVSLAVADLVVAIYPYPLV). Residues 85-102 (LMSIFNNGWNLGYLHCQV) are Extracellular-facing. A disulfide bridge connects residues C100 and C177. The helical transmembrane segment at 103 to 123 (SGFLMGLSVIGSIFNITGIAI) threads the bilayer. Residues 124–142 (NRYCYICHSLKYDKLYSSK) are Cytoplasmic-facing. Residues 143-163 (NSLCYVLLIWLLTLAAVLPNL) form a helical membrane-spanning segment. N162 and Q181 together coordinate melatonin. Residues 164–187 (RAGTLQYDPRIYSCTFAQSVSSAY) lie on the Extracellular side of the membrane. The helical transmembrane segment at 188–208 (TIAVVVFHFLVPMIIVIFCYL) threads the bilayer. Over 209-240 (RIWILVLQVRQRVKPDRKPKLKPQDFRNFVTM) the chain is Cytoplasmic. A helical membrane pass occupies residues 241 to 261 (FVVFVLFAICWAPLNFIGLAV). Over 262–274 (ASDPASMVPRIPE) the chain is Extracellular. Residues 275-295 (WLFVASYYMAYFNSCLNAIIY) form a helical membrane-spanning segment. The Cytoplasmic portion of the chain corresponds to 296 to 350 (GLLNQNFRKEYRRIIVSLCTARVFFVDSSNDVADRVKWKPSPLMTNNNVVKVDSV).

It belongs to the G-protein coupled receptor 1 family. As to expression, expressed in hypophyseal pars tuberalis and hypothalamic suprachiasmatic nuclei (SCN). Hippocampus.

Its subcellular location is the cell membrane. High affinity receptor for melatonin. Likely to mediate the reproductive and circadian actions of melatonin. The activity of this receptor is mediated by pertussis toxin sensitive G proteins that inhibit adenylate cyclase activity. Possibly involved in sleep induction, by melatonin activation of the potassium channel KCNMA1/BK and the dissociation of G-beta and G-gamma subunits, thereby decreasing synaptic transmission. The chain is Melatonin receptor type 1A (MTNR1A) from Homo sapiens (Human).